A 569-amino-acid chain; its full sequence is Glutamate--tRNA ligase (569 aa).

The 'HIGH' region signature appears at 110 to 120 (PNPNGPPTLGS).

The protein belongs to the class-I aminoacyl-tRNA synthetase family. Glutamate--tRNA ligase type 2 subfamily.

The protein resides in the cytoplasm. The enzyme catalyses tRNA(Glu) + L-glutamate + ATP = L-glutamyl-tRNA(Glu) + AMP + diphosphate. In terms of biological role, catalyzes the attachment of glutamate to tRNA(Glu) in a two-step reaction: glutamate is first activated by ATP to form Glu-AMP and then transferred to the acceptor end of tRNA(Glu). The polypeptide is Glutamate--tRNA ligase (Methanococcoides burtonii (strain DSM 6242 / NBRC 107633 / OCM 468 / ACE-M)).